The sequence spans 95 residues: Aspartyl/glutamyl-tRNA(Asn/Gln) amidotransferase subunit C (95 aa).

This sequence belongs to the GatC family. In terms of assembly, heterotrimer of A, B and C subunits.

The enzyme catalyses L-glutamyl-tRNA(Gln) + L-glutamine + ATP + H2O = L-glutaminyl-tRNA(Gln) + L-glutamate + ADP + phosphate + H(+). It catalyses the reaction L-aspartyl-tRNA(Asn) + L-glutamine + ATP + H2O = L-asparaginyl-tRNA(Asn) + L-glutamate + ADP + phosphate + 2 H(+). Its function is as follows. Allows the formation of correctly charged Asn-tRNA(Asn) or Gln-tRNA(Gln) through the transamidation of misacylated Asp-tRNA(Asn) or Glu-tRNA(Gln) in organisms which lack either or both of asparaginyl-tRNA or glutaminyl-tRNA synthetases. The reaction takes place in the presence of glutamine and ATP through an activated phospho-Asp-tRNA(Asn) or phospho-Glu-tRNA(Gln). The sequence is that of Aspartyl/glutamyl-tRNA(Asn/Gln) amidotransferase subunit C from Brucella melitensis biotype 2 (strain ATCC 23457).